The primary structure comprises 429 residues: Glutamate-1-semialdehyde 2,1-aminomutase 2 (429 aa).

Position 268 is an N6-(pyridoxal phosphate)lysine (Lys268).

It belongs to the class-III pyridoxal-phosphate-dependent aminotransferase family. HemL subfamily. Homodimer. The cofactor is pyridoxal 5'-phosphate.

It is found in the cytoplasm. The enzyme catalyses (S)-4-amino-5-oxopentanoate = 5-aminolevulinate. The protein operates within porphyrin-containing compound metabolism; protoporphyrin-IX biosynthesis; 5-aminolevulinate from L-glutamyl-tRNA(Glu): step 2/2. The protein is Glutamate-1-semialdehyde 2,1-aminomutase 2 of Listeria monocytogenes serotype 4a (strain HCC23).